The following is a 296-amino-acid chain: Probable endonuclease 4 (296 aa).

Zn(2+) contacts are provided by His68, His108, Glu145, Asp179, His182, His216, Asp229, His231, and Glu261.

It belongs to the AP endonuclease 2 family. It depends on Zn(2+) as a cofactor.

It carries out the reaction Endonucleolytic cleavage to 5'-phosphooligonucleotide end-products.. Its function is as follows. Endonuclease IV plays a role in DNA repair. It cleaves phosphodiester bonds at apurinic or apyrimidinic (AP) sites, generating a 3'-hydroxyl group and a 5'-terminal sugar phosphate. This chain is Probable endonuclease 4, found in Geobacter sulfurreducens (strain ATCC 51573 / DSM 12127 / PCA).